The primary structure comprises 395 residues: S-adenosylmethionine synthase (395 aa).

Residue His-14 coordinates ATP. Mg(2+) is bound at residue Asp-16. Glu-42 contacts K(+). Positions 55 and 98 each coordinate L-methionine. Residues 98–108 (QSPDIAMGVNK) are flexible loop. Residues 174–176 (DGK), 240–241 (RF), Asp-249, 255–256 (RK), Ala-272, and Lys-276 contribute to the ATP site. Asp-249 lines the L-methionine pocket. Position 280 (Lys-280) interacts with L-methionine.

It belongs to the AdoMet synthase family. As to quaternary structure, homotetramer; dimer of dimers. Mg(2+) is required as a cofactor. K(+) serves as cofactor.

It localises to the cytoplasm. It carries out the reaction L-methionine + ATP + H2O = S-adenosyl-L-methionine + phosphate + diphosphate. The protein operates within amino-acid biosynthesis; S-adenosyl-L-methionine biosynthesis; S-adenosyl-L-methionine from L-methionine: step 1/1. In terms of biological role, catalyzes the formation of S-adenosylmethionine (AdoMet) from methionine and ATP. The overall synthetic reaction is composed of two sequential steps, AdoMet formation and the subsequent tripolyphosphate hydrolysis which occurs prior to release of AdoMet from the enzyme. The protein is S-adenosylmethionine synthase of Caldanaerobacter subterraneus subsp. tengcongensis (strain DSM 15242 / JCM 11007 / NBRC 100824 / MB4) (Thermoanaerobacter tengcongensis).